Consider the following 122-residue polypeptide: Structural protein p14.5 (122 aa).

Disordered regions lie at residues 1–27 (MADF…LEYD) and 85–122 (TSLV…HKSK). An N-acetylalanine; by host modification is found at alanine 2. The span at 105–122 (KPKKKKHLFPKLSSHKSK) shows a compositional bias: basic residues.

Belongs to the asfivirus structural protein p14.5 family. As to quaternary structure, interacts with the major capsid protein. Interacts with host IRF3; this interaction interferes with the recruitment of IRF3 to TBK1. Acetylated.

It is found in the virion. Its function is as follows. Structural protein required for transport of intracellular particles from the assembly sites to the plasma membrane. Binds to both ssDNA and dsDNA. Suppressed the activation of the cGAS/STING pathway by interfering with the recruitment of IRF3 to TBK1, which in turn suppresses IRF3 phosphorylation, decreasing interferon production. In African swine fever virus (isolate Tick/Malawi/Lil 20-1/1983) (ASFV), this protein is Structural protein p14.5.